The sequence spans 292 residues: MSMEMELFVTPEKQRQHPSVSVEKTPVRRKLIVDDDSEIGSEKKGQSRTSGGGLRQFSVMVCQKLEAKKITTYKEVADEIISDFATIKQNAEKPLNENEYNEKNIRRRVYDALNVFMALDIIARDKKEIRWKGLPITCKKDVEEVKMDRNKVMSSVQKKAAFLKELREKVSSLESLMSRNQEMVVKTQGPAEGFTLPFILLETNPHAVVEIEISEDMQLVHLDFNSTPFSVHDDAYILKLMQEQKQEQNRVSSSSSTHHQSQHSSAHSSSSSCIASGTSGPVCWNSGSIDTR.

Residues 1–25 (MSMEMELFVTPEKQRQHPSVSVEKT) form a disordered region. Residues 51 to 135 (GGGLRQFSVM…KKEIRWKGLP (85 aa)) mediate DNA binding. Residues 101–135 (NEKNIRRRVYDALNVFMALDIIARDKKEIRWKGLP) carry the DEF box motif. Residues 163–184 (LKELREKVSSLESLMSRNQEMV) adopt a coiled-coil conformation. Positions 246–280 (QEQNRVSSSSSTHHQSQHSSAHSSSSSCIASGTSG) are disordered. Over residues 252–280 (SSSSSTHHQSQHSSAHSSSSSCIASGTSG) the composition is skewed to low complexity.

It belongs to the E2F/DP family. Heterodimer with E2F. Interacts preferentially with E2FA and E2FB, but also with E2FC. As to expression, strongly expressed in the actively dividing tissues of the shoot apical meristem, young leaf primordia, the vascular tissues of the maturing leaf primordia and axillary buds.

It is found in the cytoplasm. It localises to the nucleus. Its function is as follows. Involved in the regulation of the G1/S transition. Increases the DNA binding and the transactivation activities of E2F proteins after heterodimerization. The complex DPA/E2FA promotes cell division and acts as a regulator of the endocycle. Positively regulates the activity of S phase-specific genes. The polypeptide is Transcription factor-like protein DPA (DPA) (Arabidopsis thaliana (Mouse-ear cress)).